The sequence spans 588 residues: Adenine deaminase (588 aa).

It belongs to the metallo-dependent hydrolases superfamily. Adenine deaminase family. Homodimer. It depends on Mn(2+) as a cofactor.

It carries out the reaction adenine + H2O + H(+) = hypoxanthine + NH4(+). This chain is Adenine deaminase, found in Escherichia coli O9:H4 (strain HS).